The primary structure comprises 38 residues: Large ribosomal subunit protein bL36 (38 aa).

It belongs to the bacterial ribosomal protein bL36 family.

The protein is Large ribosomal subunit protein bL36 of Ectopseudomonas mendocina (strain ymp) (Pseudomonas mendocina).